We begin with the raw amino-acid sequence, 161 residues long: Cell division protein SepF 2 (161 aa).

The disordered stretch occupies residues 19-47; it reads EDSEKAPELSSSRETKTKNQNQSKSLLRS. Residues 21–35 show a composition bias toward basic and acidic residues; sequence SEKAPELSSSRETKT.

The protein belongs to the SepF family. In terms of assembly, homodimer. Interacts with FtsZ.

It is found in the cytoplasm. Its function is as follows. Cell division protein that is part of the divisome complex and is recruited early to the Z-ring. Probably stimulates Z-ring formation, perhaps through the cross-linking of FtsZ protofilaments. Its function overlaps with FtsA. In Desulforamulus reducens (strain ATCC BAA-1160 / DSM 100696 / MI-1) (Desulfotomaculum reducens), this protein is Cell division protein SepF 2.